Consider the following 190-residue polypeptide: Nucleoside triphosphate pyrophosphatase (190 aa).

D69 (proton acceptor) is an active-site residue.

The protein belongs to the Maf family. A divalent metal cation serves as cofactor.

The protein localises to the cytoplasm. It carries out the reaction a ribonucleoside 5'-triphosphate + H2O = a ribonucleoside 5'-phosphate + diphosphate + H(+). The enzyme catalyses a 2'-deoxyribonucleoside 5'-triphosphate + H2O = a 2'-deoxyribonucleoside 5'-phosphate + diphosphate + H(+). Its function is as follows. Nucleoside triphosphate pyrophosphatase. May have a dual role in cell division arrest and in preventing the incorporation of modified nucleotides into cellular nucleic acids. This is Nucleoside triphosphate pyrophosphatase from Helicobacter pylori (strain G27).